The primary structure comprises 873 residues: Probable inorganic carbon transporter subunit DabA (873 aa).

Zn(2+) contacts are provided by C393, D395, H575, and C590.

Belongs to the inorganic carbon transporter (TC 9.A.2) DabA family. In terms of assembly, forms a complex with DabB. It depends on Zn(2+) as a cofactor.

The protein localises to the cell membrane. Functionally, part of an energy-coupled inorganic carbon pump. This is Probable inorganic carbon transporter subunit DabA from Bacillus licheniformis (strain ATCC 14580 / DSM 13 / JCM 2505 / CCUG 7422 / NBRC 12200 / NCIMB 9375 / NCTC 10341 / NRRL NRS-1264 / Gibson 46).